Reading from the N-terminus, the 363-residue chain is Jasmonate-induced oxygenase 3 (363 aa).

The 103-residue stretch at 210–312 (ESGGCLRVNY…RLSLAFFYNP (103 aa)) folds into the Fe2OG dioxygenase domain. Residue R216 participates in jasmonate binding. Positions 218 and 220 each coordinate 2-oxoglutarate. H235, D237, and H293 together coordinate Fe cation. 2-oxoglutarate is bound by residues R303 and S305. Positions 342 and 346 each coordinate jasmonate.

The protein belongs to the iron/ascorbate-dependent oxidoreductase family. It depends on L-ascorbate as a cofactor. Fe(2+) is required as a cofactor.

The enzyme catalyses jasmonate + 2-oxoglutarate + O2 = (1R,2R)-12-hydroxyjasmonate + succinate + CO2. 2-oxoglutarate-dependent dioxygenase involved in the oxidation of jasmonate (JA), a stress-induced phytohormone synthesized in response to attack by pathogens and herbivores, which triggers the activation of defense responses via the JA-mediated signaling pathway. Converts JA to 12-hydroxyjasmonate (12OH-JA), an inactive form of JA. Is specific to free JA, and cannot oxidize the bioactive form jasmonoyl-L-isoleucine (JA-Ile) or other JA-amino acid conjugates. Prevents over-accumulation of JA and indirectly its bioactive form JA-Ile under stress response. Acts as a negative regulator of JA-mediated defense signaling, by contributing to 12OH-JA accumulation, which represses JA defense responses upon infection by the fungal pathogen Botrytis cinerea. Acts as a negative regulator of JA-mediated defense responses upon infestation by the herbivorous caterpillar Mamestra brassicae. The polypeptide is Jasmonate-induced oxygenase 3 (Arabidopsis thaliana (Mouse-ear cress)).